Consider the following 332-residue polypeptide: Fructose-1,6-bisphosphatase class 1 (332 aa).

Residues E89, D110, L112, and D113 each contribute to the Mg(2+) site. Residues 113 to 116 (DGSS), N206, Y239, 257 to 259 (YLY), and K269 each bind substrate. Residue E275 coordinates Mg(2+).

It belongs to the FBPase class 1 family. In terms of assembly, homotetramer. It depends on Mg(2+) as a cofactor.

The protein localises to the cytoplasm. The enzyme catalyses beta-D-fructose 1,6-bisphosphate + H2O = beta-D-fructose 6-phosphate + phosphate. It participates in carbohydrate biosynthesis; gluconeogenesis. The chain is Fructose-1,6-bisphosphatase class 1 from Salmonella typhimurium (strain LT2 / SGSC1412 / ATCC 700720).